The sequence spans 133 residues: Holo-[acyl-carrier-protein] synthase (133 aa).

Residues Asp-8 and Glu-56 each contribute to the Mg(2+) site.

It belongs to the P-Pant transferase superfamily. AcpS family. Mg(2+) serves as cofactor.

Its subcellular location is the cytoplasm. It carries out the reaction apo-[ACP] + CoA = holo-[ACP] + adenosine 3',5'-bisphosphate + H(+). In terms of biological role, transfers the 4'-phosphopantetheine moiety from coenzyme A to a Ser of acyl-carrier-protein. In Clostridium perfringens (strain SM101 / Type A), this protein is Holo-[acyl-carrier-protein] synthase.